Here is a 297-residue protein sequence, read N- to C-terminus: Protein phosphatase PTC7 homolog (297 aa).

Residues 1 to 27 (MLSVLSYGRLVARAVIGGLSQTDSRDY) constitute a mitochondrion transit peptide. The PPM-type phosphatase domain occupies 28–292 (SLVSASFGFG…DDITVLLSIV (265 aa)). Residues D71, G72, and D216 each coordinate Mn(2+).

The protein belongs to the PP2C family. Mg(2+) serves as cofactor. The cofactor is Mn(2+).

Its subcellular location is the mitochondrion matrix. The enzyme catalyses O-phospho-L-seryl-[protein] + H2O = L-seryl-[protein] + phosphate. It carries out the reaction O-phospho-L-threonyl-[protein] + H2O = L-threonyl-[protein] + phosphate. In terms of biological role, protein phosphatase which positively regulates biosynthesis of the ubiquinone, coenzyme Q. Dephosphorylates the ubiquinone biosynthesis protein coq7 which is likely to lead to its activation. This chain is Protein phosphatase PTC7 homolog (pptc7), found in Danio rerio (Zebrafish).